Here is a 180-residue protein sequence, read N- to C-terminus: Ribulose bisphosphate carboxylase small subunit, chloroplastic (180 aa).

The transit peptide at 1-56 directs the protein to the chloroplast; sequence MASSIMSSAAVATRSNGAQASMVAPFTGLKSNASFPVSRKTNLDITSIASNGGRVR.

The protein belongs to the RuBisCO small chain family. In terms of assembly, heterohexadecamer of 8 large and 8 small subunits.

The protein localises to the plastid. Its subcellular location is the chloroplast. Functionally, ruBisCO catalyzes two reactions: the carboxylation of D-ribulose 1,5-bisphosphate, the primary event in carbon dioxide fixation, as well as the oxidative fragmentation of the pentose substrate. Both reactions occur simultaneously and in competition at the same active site. Although the small subunit is not catalytic it is essential for maximal activity. The chain is Ribulose bisphosphate carboxylase small subunit, chloroplastic from Stellaria longipes (Longstalk starwort).